Here is a 457-residue protein sequence, read N- to C-terminus: C4-dicarboxylate transport protein (457 aa).

Helical transmembrane passes span 22–42, 55–75, 90–110, 138–158, 168–188, 209–229, 242–262, 335–357, and 376–396; these read FQVV…PAFA, LVKM…IAGM, VYFL…AHVV, LTLV…AFTG, GPNI…LALV, LVHI…AFTI, WLVG…LGVV, LFIA…LAVA, and AATL…ILGV.

Belongs to the dicarboxylate/amino acid:cation symporter (DAACS) (TC 2.A.23) family.

The protein resides in the cell inner membrane. Functionally, responsible for the transport of dicarboxylates such as succinate, fumarate, and malate from the periplasm across the membrane. The sequence is that of C4-dicarboxylate transport protein from Xanthomonas oryzae pv. oryzae (strain MAFF 311018).